A 60-amino-acid polypeptide reads, in one-letter code: U1-theraphotoxin-Agm3a (60 aa).

An N-terminal signal peptide occupies residues 1-21 (MKFSVLVFILGLVLLLALSSA). Residues 22–29 (TEMEENAR) constitute a propeptide that is removed on maturation. 3 disulfides stabilise this stretch: cysteine 31/cysteine 45, cysteine 38/cysteine 50, and cysteine 44/cysteine 57.

The protein belongs to the neurotoxin 10 (Hwtx-1) family. 63 (VsTx1) subfamily. Expressed by the venom gland.

Its subcellular location is the secreted. Inhibits sodium channels Nav1.7/SCN9A and potassium channels Kv11.1/KCNH2. Also binds the voltage-sensor domain of the potassium channel KvAP (from the archaeon Aeropyrum pernix) with very slow apparent binding kinetics and affects channel gating. Reaches its target by dynamically partitioning into anionic or zwitterionic headgroup lipid membranes. May bind to the open state of KvAP. The polypeptide is U1-theraphotoxin-Agm3a (Acanthoscurria gomesiana (Tarantula spider)).